A 596-amino-acid chain; its full sequence is MHRYRSHTCAALRKSDVGSTVRISGWVHRVRDHGGVLFIDLRDHYGITQVVADPDSPAFQMAETVRGEWVIRIDGLVKARTEDTVNKTMATGEIELYAQEIEVLSAAKELPLPVFGEPDYPEDVRLKYRFLDLRRETLHRNIVKRTQVISAMRREMGNVGFTEYTTPILTASSPEGARDFLVPSRIHPGTFYALPQAPQQYKQLLMVAGFDRYFQIAPCFRDEDPRADRLPGEFYQLDLEMSFVTQEDVWNTMGPLMTSIFEEFAEGKPVTKEWPRIPYDEAIRKYGSDKPDLRNPIVMQAVTEHFAGSGFKVFAGMIASNPKVEIWAIPAKTGGSRAFCDRMNAWAQSTGQPGLGYIFWRKEGDKLEGAGPLAKNIGEERTDAIRTQLGLDDGDACFFVAGDPAKFYKFAGEARTKAGEELNLVDRDRFELCWIVDFPFFEWSEEDKKVDFAHNPFSMPQGGLDALQNQDPLTIKAFQYDAVCNGFEIASGSIRNQSPETMVAAFEKVGLSQQDVEDRFGGLYRAFQYGAPPHGGAAFGIDRIVMLLVGAKNLREISLFPMNQQAQDLLMGAPSPAAPTQLRELSIRPIPPVKKD.

Glu-175 serves as a coordination point for L-aspartate. The aspartate stretch occupies residues 199 to 202 (QQYK). Residues Arg-221 and His-454 each contribute to the L-aspartate site. Residue 221-223 (RDE) coordinates ATP. Glu-488 serves as a coordination point for ATP. Arg-495 lines the L-aspartate pocket. 540-543 (GIDR) is an ATP binding site.

It belongs to the class-II aminoacyl-tRNA synthetase family. Type 1 subfamily. As to quaternary structure, homodimer.

The protein resides in the cytoplasm. It carries out the reaction tRNA(Asx) + L-aspartate + ATP = L-aspartyl-tRNA(Asx) + AMP + diphosphate. In terms of biological role, aspartyl-tRNA synthetase with relaxed tRNA specificity since it is able to aspartylate not only its cognate tRNA(Asp) but also tRNA(Asn). Reaction proceeds in two steps: L-aspartate is first activated by ATP to form Asp-AMP and then transferred to the acceptor end of tRNA(Asp/Asn). In Rhizobium johnstonii (strain DSM 114642 / LMG 32736 / 3841) (Rhizobium leguminosarum bv. viciae), this protein is Aspartate--tRNA(Asp/Asn) ligase.